A 581-amino-acid chain; its full sequence is FAD-linked oxidoreductase easE (581 aa).

Residues 1-25 (MYRLLGPLACLALAWFFTWAPSGRC) form the signal peptide. Residues asparagine 44 and asparagine 73 are each glycosylated (N-linked (GlcNAc...) asparagine). The 185-residue stretch at 122-306 (HQGRIPLYSA…AQATIRVFPD (185 aa)) folds into the FAD-binding PCMH-type domain. Asparagine 369 carries an N-linked (GlcNAc...) asparagine glycan.

The protein belongs to the oxygen-dependent FAD-linked oxidoreductase family. FAD is required as a cofactor.

The protein operates within alkaloid biosynthesis; ergot alkaloid biosynthesis. Its function is as follows. FAD-linked oxidoreductase; part of the gene cluster that mediates the biosynthesis of fungal ergot alkaloid. DmaW catalyzes the first step of ergot alkaloid biosynthesis by condensing dimethylallyl diphosphate (DMAP) and tryptophan to form 4-dimethylallyl-L-tryptophan. The second step is catalyzed by the methyltransferase easF that methylates 4-dimethylallyl-L-tryptophan in the presence of S-adenosyl-L-methionine, resulting in the formation of 4-dimethylallyl-L-abrine. The catalase easC and the FAD-dependent oxidoreductase easE then transform 4-dimethylallyl-L-abrine to chanoclavine-I which is further oxidized by easD in the presence of NAD(+), resulting in the formation of chanoclavine-I aldehyde. Agroclavine dehydrogenase easG then mediates the conversion of chanoclavine-I aldehyde to agroclavine via a non-enzymatic adduct reaction: the substrate is an iminium intermediate that is formed spontaneously from chanoclavine-I aldehyde in the presence of glutathione. Further conversion of agroclavine to paspalic acid is a two-step process involving oxidation of agroclavine to elymoclavine and of elymoclavine to paspalic acid, the second step being performed by the elymoclavine oxidase cloA. However, cloA does not encode a functional enzyme indicating that C.fusiformis terminates its ergot alkaloid pathway at elymoclavine. This chain is FAD-linked oxidoreductase easE, found in Claviceps fusiformis (Ergot fungus).